Here is a 208-residue protein sequence, read N- to C-terminus: Segregation and condensation protein B (208 aa).

The protein belongs to the ScpB family. Homodimer. Homodimerization may be required to stabilize the binding of ScpA to the Smc head domains. Component of a cohesin-like complex composed of ScpA, ScpB and the Smc homodimer, in which ScpA and ScpB bind to the head domain of Smc. The presence of the three proteins is required for the association of the complex with DNA.

It is found in the cytoplasm. Functionally, participates in chromosomal partition during cell division. May act via the formation of a condensin-like complex containing Smc and ScpA that pull DNA away from mid-cell into both cell halves. In Mycoplasma pneumoniae (strain ATCC 29342 / M129 / Subtype 1) (Mycoplasmoides pneumoniae), this protein is Segregation and condensation protein B.